A 466-amino-acid chain; its full sequence is 3-isopropylmalate dehydratase large subunit (466 aa).

Positions 347, 407, and 410 each coordinate [4Fe-4S] cluster.

The protein belongs to the aconitase/IPM isomerase family. LeuC type 1 subfamily. In terms of assembly, heterodimer of LeuC and LeuD. The cofactor is [4Fe-4S] cluster.

The enzyme catalyses (2R,3S)-3-isopropylmalate = (2S)-2-isopropylmalate. The protein operates within amino-acid biosynthesis; L-leucine biosynthesis; L-leucine from 3-methyl-2-oxobutanoate: step 2/4. In terms of biological role, catalyzes the isomerization between 2-isopropylmalate and 3-isopropylmalate, via the formation of 2-isopropylmaleate. The polypeptide is 3-isopropylmalate dehydratase large subunit (Shewanella loihica (strain ATCC BAA-1088 / PV-4)).